The sequence spans 75 residues: Protein TM_1420 (75 aa).

Positions 6, 11, 39, and 43 each coordinate [2Fe-2S] cluster.

[2Fe-2S] cluster serves as cofactor.

Its function is as follows. Might be part of a multi-protein complex, possibly involved in metal cluster assembly. The sequence is that of Protein TM_1420 from Thermotoga maritima (strain ATCC 43589 / DSM 3109 / JCM 10099 / NBRC 100826 / MSB8).